The sequence spans 657 residues: N-acetylgalactosaminyltransferase 7 (657 aa).

The Cytoplasmic portion of the chain corresponds to 1-6 (MRLKIG). The chain crosses the membrane as a helical; Signal-anchor for type II membrane protein span at residues 7–29 (FILRSLLVVGSFLGLVVLWSSLT). Residues 30–657 (PRPDDPSPLS…KWEMNNIHSV (628 aa)) are Lumenal-facing. Residues 31–66 (RPDDPSPLSRMREDRDVNDPMPNRGGNGLAPGEDRF) form a disordered region. Cystine bridges form between cysteine 197-cysteine 435, cysteine 426-cysteine 507, cysteine 545-cysteine 562, cysteine 585-cysteine 600, and cysteine 625-cysteine 640. Residues 206 to 317 (LLTSSVVIVF…VNWYAPLVAP (112 aa)) are catalytic subdomain A. 2 residues coordinate substrate: aspartate 247 and arginine 277. Residues aspartate 301 and histidine 303 each coordinate Mn(2+). Positions 381 to 443 (PYRSPAMAGG…PCSRVGHIYR (63 aa)) are catalytic subdomain B. Substrate is bound at residue tryptophan 412. Position 440 (histidine 440) interacts with Mn(2+). Arginine 443 lines the substrate pocket. Residues 532-652 (VDWGEIRGFE…SKTTQKWEMN (121 aa)) form the Ricin B-type lectin domain.

The protein belongs to the glycosyltransferase 2 family. GalNAc-T subfamily. The cofactor is Mn(2+).

It localises to the golgi apparatus membrane. The catalysed reaction is L-seryl-[protein] + UDP-N-acetyl-alpha-D-galactosamine = a 3-O-[N-acetyl-alpha-D-galactosaminyl]-L-seryl-[protein] + UDP + H(+). It catalyses the reaction L-threonyl-[protein] + UDP-N-acetyl-alpha-D-galactosamine = a 3-O-[N-acetyl-alpha-D-galactosaminyl]-L-threonyl-[protein] + UDP + H(+). Its pathway is protein modification; protein glycosylation. Its function is as follows. Glycopeptide transferase involved in O-linked oligosaccharide biosynthesis, which catalyzes the transfer of an N-acetyl-D-galactosamine residue to an already glycosylated peptide. In contrast to other proteins of the family, it does not act as a peptide transferase that transfers GalNAc onto serine or threonine residue on the protein receptor, but instead requires the prior addition of a GalNAc on a peptide before adding additional GalNAc moieties. Some peptide transferase activity is however not excluded, considering that its appropriate peptide substrate may remain unidentified. In Pongo abelii (Sumatran orangutan), this protein is N-acetylgalactosaminyltransferase 7 (GALNT7).